The sequence spans 158 residues: Transcription elongation factor GreA (158 aa).

Positions 48–75 (NSEYDSAKEDQAFVEGRIAQLEKMIRNA) form a coiled coil.

The protein belongs to the GreA/GreB family.

Necessary for efficient RNA polymerase transcription elongation past template-encoded arresting sites. The arresting sites in DNA have the property of trapping a certain fraction of elongating RNA polymerases that pass through, resulting in locked ternary complexes. Cleavage of the nascent transcript by cleavage factors such as GreA or GreB allows the resumption of elongation from the new 3'terminus. GreA releases sequences of 2 to 3 nucleotides. The sequence is that of Transcription elongation factor GreA from Shouchella clausii (strain KSM-K16) (Alkalihalobacillus clausii).